We begin with the raw amino-acid sequence, 447 residues long: GTPase Der (447 aa).

2 consecutive EngA-type G domains span residues 3 to 167 and 181 to 354; these read PVIA…VQER and VKIA…AAAM. Residues 9-16, 56-60, 119-122, 187-194, 234-238, and 299-302 contribute to the GTP site; these read GRPNVGKS, DTGGF, NKAE, DTAGL, and NKWD. Positions 355-439 constitute a KH-like domain; it reads VKLPTPQLTR…PLRIEFRTNK (85 aa).

The protein belongs to the TRAFAC class TrmE-Era-EngA-EngB-Septin-like GTPase superfamily. EngA (Der) GTPase family. In terms of assembly, associates with the 50S ribosomal subunit.

In terms of biological role, GTPase that plays an essential role in the late steps of ribosome biogenesis. The polypeptide is GTPase Der (Cupriavidus taiwanensis (strain DSM 17343 / BCRC 17206 / CCUG 44338 / CIP 107171 / LMG 19424 / R1) (Ralstonia taiwanensis (strain LMG 19424))).